The sequence spans 788 residues: MSDQDSSTSSTSFPKYLEHLSGDGKAIGVLTSGGDAQGMNAAVRAVVRMGIYTGAKVYFIYEGYQGMVDGGSNIVEAKWECVSSILQVGGTIIGSARCQAFRSREGRLKAACNLVRLGITNLCVIGGDGSLTGANLFRKEWSGLLEELAKNGEIDSDTVKKHAYLNVVGMVGSIDNDFCGTDMTIGTDSALHRIIEVVDAIMTTAQSHQRTFVLEVMGRHCGYLALVSALACGADWVFLPESPPEEGWEEEMCLKLSENRARKKRLNIIIVSEGAIDTQNKPITSEKIKELVVTNLGFDTRVTILGHVQRGGTPSAFDRILASRMGVEAVLALLEATPETPACVVSLRGNQAVRLPLMECVQMTQDVQKAMDERRFDEAVKLRGRSFEGNLNTYKRLAIKEPDDKIPKSNCNVAIINVGAPAAGMNAAVRSAVRVGIAEGHKMFAIYDGFDGLANGQIKEIGWGDVGGWTGQGGSILGTKRTLPGKYLEKIAEQMHSKNINALLIIGGFEAYLGLLELAAARNKHEAFCVPMVMVPATVSNNVPGSDFSIGADTALNTITDTCDRIKQSASGTKRRVFIIETMGGYCGYLANMGGLAAGADAAYIFEEQFDIRDLQSNVMHLTEKMKTSIQRGLVLRNENCSVNYTTDFIYQLYSEEGKGVFDCRKNVLGHMQQGGAPSPFDRNFGTKISAKAMEWISAKLKGSHGTGKKFVSDDSICVLGIQKRDLLFKPVAELRKATDFEHRIPKQQWWLKLRPIMKILAKYEASYDMSDVGKLEPVHNHGELSAI.

At Met1 the chain carries N-acetylmethionine. An N-terminal catalytic PFK domain 1 region spans residues 1–399; sequence MSDQDSSTSS…NLNTYKRLAI (399 aa). Residues Ser2, Ser6, Ser12, and Ser21 each carry the phosphoserine modification. ATP-binding positions include Gly34, 97-98, and 127-130; these read RC and GDGS. Residue Asp128 participates in Mg(2+) binding. Ser142 is modified (phosphoserine). Substrate is bound by residues 173–175, Arg210, 217–219, Glu273, Arg301, and 307–310; these read SID, MGR, and HVQR. Residue Asp175 is the Proton acceptor of the active site. Ser386 bears the Phosphoserine mark. Lys395 bears the N6-acetyllysine mark. The segment at 400-411 is interdomain linker; the sequence is KEPDDKIPKSNC. Positions 412 to 788 are C-terminal regulatory PFK domain 2; it reads NVAIINVGAP…VHNHGELSAI (377 aa). Arg481 lines the beta-D-fructose 2,6-bisphosphate pocket. Lys486 carries the N6-acetyllysine modification. Residues 538-542, Arg576, 583-585, and Glu639 contribute to the beta-D-fructose 2,6-bisphosphate site; these read TVSNN and MGG. An O-linked (GlcNAc) serine glycan is attached at Ser540. The residue at position 651 (Tyr651) is a Phosphotyrosine. Beta-D-fructose 2,6-bisphosphate-binding positions include Arg665 and 671-674; that span reads HMQQ. The residue at position 688 (Lys688) is an N6-acetyllysine. Beta-D-fructose 2,6-bisphosphate is bound at residue Arg744.

It belongs to the phosphofructokinase type A (PFKA) family. ATP-dependent PFK group I subfamily. Eukaryotic two domain clade 'E' sub-subfamily. Homo- and heterotetramers. Phosphofructokinase (PFK) enzyme functions as a tetramer composed of different combinations of 3 types of subunits, called PFKM (M), PFKL (L) and PFKP (P). The composition of the PFK tetramer differs according to the tissue type it is present in. The kinetic and regulatory properties of the tetrameric enzyme are dependent on the subunit composition, hence can vary across tissues. Interacts with ATG4B; promoting phosphorylation of ATG4B. The cofactor is Mg(2+). Post-translationally, glcNAcylation decreases enzyme activity. In terms of processing, phosphorylation at Ser-386 promotes interaction with ATG4B. As to expression, expressed at high level in neuroendocrine tissues.

The protein localises to the cytoplasm. It catalyses the reaction beta-D-fructose 6-phosphate + ATP = beta-D-fructose 1,6-bisphosphate + ADP + H(+). It participates in carbohydrate degradation; glycolysis; D-glyceraldehyde 3-phosphate and glycerone phosphate from D-glucose: step 3/4. With respect to regulation, allosterically activated by ADP, AMP, or fructose 2,6-bisphosphate, and allosterically inhibited by ATP or citrate. Functionally, catalyzes the phosphorylation of D-fructose 6-phosphate to fructose 1,6-bisphosphate by ATP, the first committing step of glycolysis. In Rattus norvegicus (Rat), this protein is ATP-dependent 6-phosphofructokinase, platelet type (Pfkp).